We begin with the raw amino-acid sequence, 37 residues long: Large ribosomal subunit protein bL36c (37 aa).

It belongs to the bacterial ribosomal protein bL36 family.

The protein localises to the plastid. Its subcellular location is the chloroplast. This Lepidium virginicum (Virginia pepperweed) protein is Large ribosomal subunit protein bL36c.